We begin with the raw amino-acid sequence, 132 residues long: Large ribosomal subunit protein bL19 (132 aa).

It belongs to the bacterial ribosomal protein bL19 family.

Functionally, this protein is located at the 30S-50S ribosomal subunit interface and may play a role in the structure and function of the aminoacyl-tRNA binding site. This chain is Large ribosomal subunit protein bL19, found in Maricaulis maris (strain MCS10) (Caulobacter maris).